Reading from the N-terminus, the 691-residue chain is DNA ligase (691 aa).

Residues 53–57, 102–103, and glutamate 135 each bind NAD(+); these read DSEYD and SL. Lysine 137 acts as the N6-AMP-lysine intermediate in catalysis. NAD(+)-binding residues include arginine 158, glutamate 195, lysine 310, and lysine 334. Positions 428, 431, 446, and 452 each coordinate Zn(2+). Positions 613-691 constitute a BRCT domain; that stretch reads SEGLPLDGQT…EEEFLALVGE (79 aa).

It belongs to the NAD-dependent DNA ligase family. LigA subfamily. Requires Mg(2+) as cofactor. It depends on Mn(2+) as a cofactor.

The catalysed reaction is NAD(+) + (deoxyribonucleotide)n-3'-hydroxyl + 5'-phospho-(deoxyribonucleotide)m = (deoxyribonucleotide)n+m + AMP + beta-nicotinamide D-nucleotide.. DNA ligase that catalyzes the formation of phosphodiester linkages between 5'-phosphoryl and 3'-hydroxyl groups in double-stranded DNA using NAD as a coenzyme and as the energy source for the reaction. It is essential for DNA replication and repair of damaged DNA. The protein is DNA ligase of Psychrobacter arcticus (strain DSM 17307 / VKM B-2377 / 273-4).